The following is a 99-amino-acid chain: Small ribosomal subunit protein uS14m (99 aa).

It belongs to the universal ribosomal protein uS14 family.

It localises to the mitochondrion. This chain is Small ribosomal subunit protein uS14m (RPS14), found in Oenothera berteroana (Bertero's evening primrose).